Consider the following 194-residue polypeptide: Transcriptional repressor NrdR (194 aa).

A zinc finger spans residues 3-33 (CPFCGHADDRVLDTRVQKDGSIRRRRECLEC). The ATP-cone domain occupies 48–138 (PFIIKKDGRR…VYRTFKDVQE (91 aa)). The span at 168–179 (ESEKSTNHETDS) shows a compositional bias: basic and acidic residues. A disordered region spans residues 168–194 (ESEKSTNHETDSKTPSPRTRPPGPLSN). Over residues 185 to 194 (RTRPPGPLSN) the composition is skewed to pro residues.

It belongs to the NrdR family. It depends on Zn(2+) as a cofactor.

Functionally, negatively regulates transcription of bacterial ribonucleotide reductase nrd genes and operons by binding to NrdR-boxes. The protein is Transcriptional repressor NrdR of Bdellovibrio bacteriovorus (strain ATCC 15356 / DSM 50701 / NCIMB 9529 / HD100).